Here is a 197-residue protein sequence, read N- to C-terminus: Imidazoleglycerol-phosphate dehydratase (197 aa).

Belongs to the imidazoleglycerol-phosphate dehydratase family.

It localises to the cytoplasm. It catalyses the reaction D-erythro-1-(imidazol-4-yl)glycerol 3-phosphate = 3-(imidazol-4-yl)-2-oxopropyl phosphate + H2O. It participates in amino-acid biosynthesis; L-histidine biosynthesis; L-histidine from 5-phospho-alpha-D-ribose 1-diphosphate: step 6/9. In Rhodopseudomonas palustris (strain BisA53), this protein is Imidazoleglycerol-phosphate dehydratase.